Here is a 459-residue protein sequence, read N- to C-terminus: MYDRAPRLLKLAEGGSTEAHVGPGSYQVPFLKQQATGSNAPFLSLTARESTFTIASSIEKAVPGPGHYNVSEAQKISRSPTLTRSVDVPSIPSCGKSYGYHINDDGSIIKCFPPACDSTLGPAYYKPQFDVSNATLKYKGIHFGNSSGRQELPKKSGPGPGQYDIVQKKTSYYENVNIKRDQQQNYCSFIPRLYEIIVLQEKKKRFLPMKSITPAPGTYNEPRTALKSLKKTSGLKNIPFGQSAVRFTQDIRTEEMPGPGFYNVLNNTIIASVRNICSKKQKKSAFGSSVPRTFFSVQKEACATPGPADYQEFWHSQGVGISDELPNLTNKYAAFLSRAKRTMKVPDMVIPAPGSYDVHKSYEMSQVKHKYMPPRSLVAKRKHASFLSATPRCLEKVTDGPGPAAYNPVLRKSCPIPLFVKASKRFEESKEITPGPATYEISQEKKKGNLIGEMAADIM.

STPGR repeat units lie at residues 21–30 (VGPGSYQVPF), 63–73 (PGPGHYNVSEA), 119–148 (TLGPAYYKPQFDVSNATLKYKGIHFGNSSG), 157–203 (GPGP…QEKK), 213–243 (TPAPGTYNEPRTALKSLKKTSGLKNIPFGQS), 257–268 (PGPGFYNVLNNT), 351–377 (PAPGSYDVHKSYEMSQVKHKYMPPRSL), 400–410 (GPGPAAYNPVL), and 433–443 (TPGPATYEISQ).

This Homo sapiens (Human) protein is Sperm-tail PG-rich repeat-containing protein 2 (STPG2).